A 329-amino-acid polypeptide reads, in one-letter code: MISPVSSIPRSAHRSRPEATPYLDLTRAEWSALREKTPLPLNAEEVEKLRGLGDVIDLDEVRDIYLPLSRLLNLYVGATDGLRGALNTFLGEQGSQSGTPFVIGVAGSVAVGKSTVARLLQALLSRWPEHPRVELVTTDGFLLPTKELEARGLMSRKGFPESYDRRALTRFVADIKAGKDEVTAPVYSHLIYDIVPGQKLTVRRPDILIVEGLNVLQPALPGKDGRTRVGLADYFDFSVYVDARPEDIERWYLNRFRKLRATAFQNPSSYFRRYTQVSEDEALDYARTTWRTINKVNLLENVAPTRGRAALVVRKGPDHKVQRLSLRKL.

107-114 (GSVAVGKS) contributes to the ATP binding site.

This sequence belongs to the prokaryotic pantothenate kinase family.

It is found in the cytoplasm. It catalyses the reaction (R)-pantothenate + ATP = (R)-4'-phosphopantothenate + ADP + H(+). The protein operates within cofactor biosynthesis; coenzyme A biosynthesis; CoA from (R)-pantothenate: step 1/5. This chain is Pantothenate kinase, found in Streptomyces avermitilis (strain ATCC 31267 / DSM 46492 / JCM 5070 / NBRC 14893 / NCIMB 12804 / NRRL 8165 / MA-4680).